The sequence spans 611 residues: Probable Xaa-Pro aminopeptidase P (611 aa).

Mn(2+) contacts are provided by D408, D419, E517, and E531.

This sequence belongs to the peptidase M24B family. Mn(2+) serves as cofactor.

It catalyses the reaction Release of any N-terminal amino acid, including proline, that is linked to proline, even from a dipeptide or tripeptide.. Catalyzes the removal of a penultimate prolyl residue from the N-termini of peptides. The polypeptide is Probable Xaa-Pro aminopeptidase P (AMPP) (Coccidioides posadasii (strain RMSCC 757 / Silveira) (Valley fever fungus)).